The chain runs to 195 residues: Meiotically up-regulated gene 84 protein (195 aa).

Over 1–84 the chain is Cytoplasmic; it reads MTLTHHSTFI…IMVKVPTYEY (84 aa). A helical transmembrane segment spans residues 85–105; the sequence is YGFVMYLVSMLGFGVYIVWAL. The Lumenal portion of the chain corresponds to 106 to 122; it reads TPAPVLKFFEIHYYLSR. Residues 123–143 traverse the membrane as a helical segment; it reads WWALAIPTWLFVLVIYIHVVL. The Cytoplasmic portion of the chain corresponds to 144–195; that stretch reads NAYNTEVLTKPFSSLECIVDQYALVGEEDGAAHGRVVDLRLCDVNKQQLEET.

The protein localises to the endoplasmic reticulum membrane. Has a role in meiosis. This is Meiotically up-regulated gene 84 protein (mug84) from Schizosaccharomyces pombe (strain 972 / ATCC 24843) (Fission yeast).